The sequence spans 333 residues: Cytochrome f (333 aa).

Positions 1 to 44 are cleaved as a signal peptide; that stretch reads MRNACTRARLTRTARAMVKTLFIAIASVTFFFTSDLALPQSAAA. Heme-binding residues include Tyr-45, Cys-66, Cys-69, and His-70. The chain crosses the membrane as a helical span at residues 299–318; it reads VGWLIAFVALVMLAQVMLVL.

This sequence belongs to the cytochrome f family. As to quaternary structure, the 4 large subunits of the cytochrome b6-f complex are cytochrome b6, subunit IV (17 kDa polypeptide, PetD), cytochrome f and the Rieske protein, while the 4 small subunits are PetG, PetL, PetM and PetN. The complex functions as a dimer. The cofactor is heme.

It is found in the cellular thylakoid membrane. Component of the cytochrome b6-f complex, which mediates electron transfer between photosystem II (PSII) and photosystem I (PSI), cyclic electron flow around PSI, and state transitions. This chain is Cytochrome f, found in Trichormus variabilis (strain ATCC 29413 / PCC 7937) (Anabaena variabilis).